A 472-amino-acid polypeptide reads, in one-letter code: Collagenase 3 (472 aa).

Residues 1-19 (MHPGVLAAFLFLSWTRCWS) form the signal peptide. Residues 20–104 (LPVPNDDDDD…PRCGVPDVGE (85 aa)) constitute a propeptide, activation peptide. Residues 95 to 102 (PRCGVPDV) carry the Cysteine switch motif. Cysteine 97 lines the Zn(2+) pocket. A glycan (N-linked (GlcNAc...) asparagine) is linked at asparagine 118. Aspartate 129 contacts Ca(2+). Asparagine 153 and asparagine 159 each carry an N-linked (GlcNAc...) asparagine glycan. Aspartate 163 contributes to the Ca(2+) binding site. Zn(2+) is bound by residues histidine 173 and aspartate 175. Residues 177–247 (YPFDGPSGLL…GALMFPIYTY (71 aa)) form an interaction with TIMP2 region. The Ca(2+) site is built by aspartate 180, glycine 181, serine 183, and leucine 185. Histidine 188 provides a ligand contact to Zn(2+). Ca(2+) is bound by residues asparagine 195, glycine 197, and aspartate 199. Position 201 (histidine 201) interacts with Zn(2+). Ca(2+) is bound by residues aspartate 203, aspartate 204, and glutamate 206. Position 223 (histidine 223) interacts with Zn(2+). Residue glutamate 224 is part of the active site. Zn(2+) is bound by residues histidine 227, histidine 233, and methionine 241. Residues 269 to 472 (PGDEDPNPKH…VMPTNSLLWC (204 aa)) form an interaction with collagen region. Hemopexin repeat units follow at residues 282-331 (PDKC…WPEL), 332-378 (PNRI…GFPK), 380-428 (VKKI…FPGI), and 429-472 (GDKV…LLWC). Cysteine 285 and cysteine 472 are joined by a disulfide. Positions 292, 294, 336, and 338 each coordinate Ca(2+). A Phosphotyrosine; by PKDCC modification is found at tyrosine 367. Residues serine 384, alanine 386, aspartate 433, and valine 435 each coordinate Ca(2+).

The protein belongs to the peptidase M10A family. It depends on Ca(2+) as a cofactor. The cofactor is Zn(2+). Post-translationally, the proenzyme is activated by removal of the propeptide; this cleavage can be effected by other matrix metalloproteinases, such as MMP2, MMP3 and MMP14 and may involve several cleavage steps. Cleavage can also be autocatalytic, after partial maturation by another protease or after treatment with 4-aminophenylmercuric acetate (APMA) (in vitro). N-glycosylated. In terms of processing, tyrosine phosphorylated by PKDCC/VLK. As to expression, seems to be specific to breast carcinomas.

It localises to the secreted. The protein resides in the extracellular space. The protein localises to the extracellular matrix. Functionally, plays a role in the degradation of extracellular matrix proteins including fibrillar collagen, fibronectin, TNC and ACAN. Cleaves triple helical collagens, including type I, type II and type III collagen, but has the highest activity with soluble type II collagen. Can also degrade collagen type IV, type XIV and type X. May also function by activating or degrading key regulatory proteins, such as TGFB1 and CCN2. Plays a role in wound healing, tissue remodeling, cartilage degradation, bone development, bone mineralization and ossification. Required for normal embryonic bone development and ossification. Plays a role in the healing of bone fractures via endochondral ossification. Plays a role in wound healing, probably by a mechanism that involves proteolytic activation of TGFB1 and degradation of CCN2. Plays a role in keratinocyte migration during wound healing. May play a role in cell migration and in tumor cell invasion. The polypeptide is Collagenase 3 (MMP13) (Equus caballus (Horse)).